We begin with the raw amino-acid sequence, 168 residues long: Cell division inhibitor SulA (168 aa).

A ftsZ binding region spans residues 106-112 (ALQTGNY). A lon protease binding region spans residues 161–168 (KIHSSLYH).

This sequence belongs to the SulA family. As to quaternary structure, interacts with FtsZ. In terms of processing, is rapidly cleaved and degraded by the Lon protease once DNA damage is repaired.

Its function is as follows. Component of the SOS system and an inhibitor of cell division. Accumulation of SulA causes rapid cessation of cell division and the appearance of long, non-septate filaments. In the presence of GTP, binds a polymerization-competent form of FtsZ in a 1:1 ratio, thus inhibiting FtsZ polymerization and therefore preventing it from participating in the assembly of the Z ring. This mechanism prevents the premature segregation of damaged DNA to daughter cells during cell division. The polypeptide is Cell division inhibitor SulA (Serratia marcescens).